We begin with the raw amino-acid sequence, 101 residues long: Urease subunit beta (101 aa).

Belongs to the urease beta subunit family. Heterotrimer of UreA (gamma), UreB (beta) and UreC (alpha) subunits. Three heterotrimers associate to form the active enzyme.

The protein localises to the cytoplasm. The enzyme catalyses urea + 2 H2O + H(+) = hydrogencarbonate + 2 NH4(+). Its pathway is nitrogen metabolism; urea degradation; CO(2) and NH(3) from urea (urease route): step 1/1. This Azotobacter vinelandii (strain DJ / ATCC BAA-1303) protein is Urease subunit beta.